A 409-amino-acid polypeptide reads, in one-letter code: Shaggy-related protein kinase NtK-1 (409 aa).

The segment at methionine 1 to glutamate 27 is disordered. A Protein kinase domain is found at tyrosine 73–phenylalanine 357. Residues valine 79–valine 87 and lysine 102 each bind ATP. The active-site Proton acceptor is the aspartate 198.

The protein belongs to the protein kinase superfamily. CMGC Ser/Thr protein kinase family. GSK-3 subfamily. Autophosphorylated mainly on threonine and serine residues.

The catalysed reaction is L-seryl-[protein] + ATP = O-phospho-L-seryl-[protein] + ADP + H(+). It catalyses the reaction L-threonyl-[protein] + ATP = O-phospho-L-threonyl-[protein] + ADP + H(+). Its function is as follows. May mediate extracellular signals to regulate transcription in differentiating cells. In Nicotiana tabacum (Common tobacco), this protein is Shaggy-related protein kinase NtK-1 (NTK-1).